Reading from the N-terminus, the 136-residue chain is Large ribosomal subunit protein uL14 (136 aa).

Belongs to the universal ribosomal protein uL14 family.

This is Large ribosomal subunit protein uL14 (rpl23) from Dictyostelium discoideum (Social amoeba).